The sequence spans 541 residues: MLRIFCFVISWCLIAFAQPDLSGFVSILGAACGYGFFWYSLEPLKKPSLPLRTLFVSCFFWIFTIEGIHFSWMLSDQYIGKLIYLVWLTLITILSVLFSGFSCLLVAIVRQKRTAFLWSLPGVWVAIEMLRFYGIFSGMSFDYLGWPMTASAYGRQFGGFLGWAGQSFAVIAVNMSFYCLLLKKPHAKMLWVLTLLLPYTFGAIHYEYLKHAFQQDKRALRVAVVQPAHPPIRPKLKSPIVVWEQLLQLVSPIQQPIDLLIFPEVVVPFGKHRQVYPYESCAHLLSSFAPLPEGKAFLSNSDCATALSQHFQCPVIIGLERWVKKENVLYWYNSAEVISHKGISVGYDKRILVPGGEYIPGGKFGSLICRQLFPKYALGCKRLPGRRSGVVQVRGLPRIGITICYEETFGYRLQSYKRQGAELLVNLTNDGWYPESRLPKVHFLHGMLRNQEFGMPCVRACQTGVTAAVDSLGRILKILPYDTRETKAPSGVLETSLPLFNYKTLYGYCGDYPMILIAFCAVSYLGGGFLGYRLLAKKEIR.

Helical transmembrane passes span 21–41, 54–74, 82–102, 116–136, 157–177, and 189–209; these read LSGFVSILGAACGYGFFWYSL, LFVSCFFWIFTIEGIHFSWML, LIYLVWLTLITILSVLFSGFS, FLWSLPGVWVAIEMLRFYGIF, FGGFLGWAGQSFAVIAVNMSF, and MLWVLTLLLPYTFGAIHYEYL. A CN hydrolase domain is found at 220-499; it reads LRVAVVQPAH…SGVLETSLPL (280 aa). Residue glutamate 264 is the Proton acceptor of the active site. Residue lysine 349 is part of the active site. Residue cysteine 404 is the Nucleophile of the active site. The chain crosses the membrane as a helical span at residues 512 to 532; it reads YPMILIAFCAVSYLGGGFLGY.

The protein belongs to the CN hydrolase family. Apolipoprotein N-acyltransferase subfamily.

Its subcellular location is the cell inner membrane. It carries out the reaction N-terminal S-1,2-diacyl-sn-glyceryl-L-cysteinyl-[lipoprotein] + a glycerophospholipid = N-acyl-S-1,2-diacyl-sn-glyceryl-L-cysteinyl-[lipoprotein] + a 2-acyl-sn-glycero-3-phospholipid + H(+). Its pathway is protein modification; lipoprotein biosynthesis (N-acyl transfer). Catalyzes the phospholipid dependent N-acylation of the N-terminal cysteine of apolipoprotein, the last step in lipoprotein maturation. This chain is Apolipoprotein N-acyltransferase, found in Chlamydia pneumoniae (Chlamydophila pneumoniae).